The following is a 232-amino-acid chain: Phosphatidylserine decarboxylase proenzyme (232 aa).

Ser190 functions as the Schiff-base intermediate with substrate; via pyruvic acid in the catalytic mechanism. Ser190 bears the Pyruvic acid (Ser); by autocatalysis mark.

It belongs to the phosphatidylserine decarboxylase family. PSD-A subfamily. As to quaternary structure, heterodimer of a large membrane-associated beta subunit and a small pyruvoyl-containing alpha subunit. Pyruvate is required as a cofactor. Post-translationally, is synthesized initially as an inactive proenzyme. Formation of the active enzyme involves a self-maturation process in which the active site pyruvoyl group is generated from an internal serine residue via an autocatalytic post-translational modification. Two non-identical subunits are generated from the proenzyme in this reaction, and the pyruvate is formed at the N-terminus of the alpha chain, which is derived from the carboxyl end of the proenzyme. The post-translation cleavage follows an unusual pathway, termed non-hydrolytic serinolysis, in which the side chain hydroxyl group of the serine supplies its oxygen atom to form the C-terminus of the beta chain, while the remainder of the serine residue undergoes an oxidative deamination to produce ammonia and the pyruvoyl prosthetic group on the alpha chain.

It is found in the cell membrane. It catalyses the reaction a 1,2-diacyl-sn-glycero-3-phospho-L-serine + H(+) = a 1,2-diacyl-sn-glycero-3-phosphoethanolamine + CO2. The protein operates within phospholipid metabolism; phosphatidylethanolamine biosynthesis; phosphatidylethanolamine from CDP-diacylglycerol: step 2/2. Its function is as follows. Catalyzes the formation of phosphatidylethanolamine (PtdEtn) from phosphatidylserine (PtdSer). The chain is Phosphatidylserine decarboxylase proenzyme from Bartonella henselae (strain ATCC 49882 / DSM 28221 / CCUG 30454 / Houston 1) (Rochalimaea henselae).